The following is a 285-amino-acid chain: AT-hook motif nuclear-localized protein 21 (285 aa).

The interval 17-95 (DGGGGGQFTT…GSKNKPKPPV (79 aa)) is disordered. Residues 39–50 (NHHHHHHNHNHH) show a composition bias toward basic residues. Positions 63 to 73 (GLGGGGGGGSG) are enriched in gly residues. Positions 78–90 (RRPRGRPAGSKNK) form a DNA-binding region, a.T hook. The PPC domain maps to 102–238 (ANTLRAHILE…EHEEHLQSGG (137 aa)).

Preferentially expressed in roots, but also in flowers and leaves. Detected in the inflorescence meristem, floral primordia and developing reproductive organs.

It localises to the nucleus. The protein localises to the nucleoplasm. Functionally, transcription factor that specifically binds AT-rich DNA sequences related to the nuclear matrix attachment regions (MARs). Binds to the MARs present in the ETTIN (ETT) promoter leading to a negative regulation of its gene expression. Functions as a molecular node downstream of the homeotic protein AGAMOUS (AG), regulating patterning and differentiation of reproductive organs. Acts as a chromatin remodeling factor that modifies the architecture of ETTIN (ETT) chromatin by modulating H3 methylation leading to the regulation of ETT expression. Seems to be involved in the regulation of a set of reproductives genes including CRABS CLAW (CRC), JAGGED (JAG) and KNUCKLES (KNU). This chain is AT-hook motif nuclear-localized protein 21, found in Arabidopsis thaliana (Mouse-ear cress).